The primary structure comprises 461 residues: Porin AaxA (461 aa).

Residues 1–22 form the signal peptide; it reads MSFRSVLLTALLSLSFTTTMQA.

It belongs to the OprB family.

The protein localises to the cell outer membrane. Its function is as follows. Facilitates L-arginine uptake, as part of the AaxABC system. The arginine uptake by the bacterium in the macrophage may be a virulence factor against the host innate immune response. The protein is Porin AaxA (aaxA) of Chlamydia trachomatis serovar L2 (strain ATCC VR-902B / DSM 19102 / 434/Bu).